Consider the following 507-residue polypeptide: ATP synthase subunit alpha, chloroplastic (507 aa).

Residue 170–177 (GDRQTGKT) participates in ATP binding.

This sequence belongs to the ATPase alpha/beta chains family. In terms of assembly, F-type ATPases have 2 components, CF(1) - the catalytic core - and CF(0) - the membrane proton channel. CF(1) has five subunits: alpha(3), beta(3), gamma(1), delta(1), epsilon(1). CF(0) has four main subunits: a, b, b' and c.

It localises to the plastid. Its subcellular location is the chloroplast thylakoid membrane. It catalyses the reaction ATP + H2O + 4 H(+)(in) = ADP + phosphate + 5 H(+)(out). Its function is as follows. Produces ATP from ADP in the presence of a proton gradient across the membrane. The alpha chain is a regulatory subunit. The protein is ATP synthase subunit alpha, chloroplastic of Nymphaea alba (White water-lily).